Here is a 378-residue protein sequence, read N- to C-terminus: Ribosomal RNA large subunit methyltransferase G (378 aa).

This sequence belongs to the methyltransferase superfamily. RlmG family.

The protein localises to the cytoplasm. The catalysed reaction is guanosine(1835) in 23S rRNA + S-adenosyl-L-methionine = N(2)-methylguanosine(1835) in 23S rRNA + S-adenosyl-L-homocysteine + H(+). Functionally, specifically methylates the guanine in position 1835 (m2G1835) of 23S rRNA. The chain is Ribosomal RNA large subunit methyltransferase G from Shigella dysenteriae serotype 1 (strain Sd197).